A 96-amino-acid chain; its full sequence is Large ribosomal subunit protein uL23 (96 aa).

The protein belongs to the universal ribosomal protein uL23 family. Part of the 50S ribosomal subunit. Contacts protein L29, and trigger factor when it is bound to the ribosome.

In terms of biological role, one of the early assembly proteins it binds 23S rRNA. One of the proteins that surrounds the polypeptide exit tunnel on the outside of the ribosome. Forms the main docking site for trigger factor binding to the ribosome. The sequence is that of Large ribosomal subunit protein uL23 from Nitratidesulfovibrio vulgaris (strain ATCC 29579 / DSM 644 / CCUG 34227 / NCIMB 8303 / VKM B-1760 / Hildenborough) (Desulfovibrio vulgaris).